Here is a 331-residue protein sequence, read N- to C-terminus: UDP-N-acetylenolpyruvoylglucosamine reductase (331 aa).

Residues 54-221 form the FAD-binding PCMH-type domain; sequence RVGGAAELYV…TQATFQLQPG (168 aa). Residue R200 is part of the active site. S251 acts as the Proton donor in catalysis. E321 is a catalytic residue.

This sequence belongs to the MurB family. It depends on FAD as a cofactor.

It is found in the cytoplasm. It catalyses the reaction UDP-N-acetyl-alpha-D-muramate + NADP(+) = UDP-N-acetyl-3-O-(1-carboxyvinyl)-alpha-D-glucosamine + NADPH + H(+). Its pathway is cell wall biogenesis; peptidoglycan biosynthesis. Functionally, cell wall formation. This is UDP-N-acetylenolpyruvoylglucosamine reductase from Trichormus variabilis (strain ATCC 29413 / PCC 7937) (Anabaena variabilis).